Reading from the N-terminus, the 501-residue chain is 2-phosphoxylose phosphatase 1 (501 aa).

The Cytoplasmic portion of the chain corresponds to 1-6 (MLLRNR). Residues 7–27 (FLLLLALAGLLAFLSLSLQFF) traverse the membrane as a helical; Signal-anchor for type II membrane protein segment. Over 28 to 501 (SRWLPVSLQL…YYDACHQRLF (474 aa)) the chain is Lumenal. Residue His120 is the Nucleophile of the active site. N-linked (GlcNAc...) asparagine glycans are attached at residues Asn328 and Asn377. The Proton donor role is filled by Asp402. Asn488 carries an N-linked (GlcNAc...) asparagine glycan.

It belongs to the histidine acid phosphatase family.

Its subcellular location is the golgi apparatus membrane. The catalysed reaction is 3-O-[beta-D-GlcA-(1-&gt;3)-beta-D-Gal-(1-&gt;3)-beta-D-Gal-(1-&gt;4)-beta-D-2-O-P-Xyl]-L-seryl-[protein] + H2O = 3-O-(beta-D-GlcA-(1-&gt;3)-beta-D-Gal-(1-&gt;3)-beta-D-Gal-(1-&gt;4)-beta-D-Xyl)-L-seryl-[protein] + phosphate. In terms of biological role, responsible for the 2-O-dephosphorylation of xylose in the glycosaminoglycan-protein linkage region of proteoglycans thereby regulating the amount of mature glycosaminoglycan (GAG) chains. Sulfated glycosaminoglycans (GAGs), including heparan sulfate and chondroitin sulfate, are synthesized on the so-called common GAG-protein linkage region (GlcUAbeta1-3Galbeta1-3Galbeta1-4Xylbeta1-O-Ser) of core proteins, which is formed by the stepwise addition of monosaccharide residues by the respective specific glycosyltransferases. Xylose 2-O-dephosphorylation during completion of linkage region formation is a prerequisite for the initiation and efficient elongation of the repeating disaccharide region of GAG chains. The chain is 2-phosphoxylose phosphatase 1 from Xenopus tropicalis (Western clawed frog).